We begin with the raw amino-acid sequence, 371 residues long: Putative 26S proteasome regulatory subunit homolog MJ1494 (371 aa).

161 to 168 (GPPGTGKT) serves as a coordination point for ATP.

This sequence belongs to the AAA ATPase family.

Its function is as follows. The 26S proteasome is involved in the ATP-dependent degradation of ubiquitinated proteins. The regulatory (or ATPase) complex confers ATP dependency and substrate specificity to the 26S complex. This chain is Putative 26S proteasome regulatory subunit homolog MJ1494, found in Methanocaldococcus jannaschii (strain ATCC 43067 / DSM 2661 / JAL-1 / JCM 10045 / NBRC 100440) (Methanococcus jannaschii).